The chain runs to 385 residues: Transcription termination factor 2, mitochondrial (385 aa).

Residues 1–35 constitute a mitochondrion transit peptide; that stretch reads MPWRLPTGHQLCRLCLLRKPRPALKIKPSSACVTY.

This sequence belongs to the mTERF family. Monomer.

Its subcellular location is the mitochondrion matrix. It is found in the mitochondrion nucleoid. In terms of biological role, binds mitochondrial DNA and plays a role in the regulation of transcription of mitochondrial mRNA and rRNA species. This chain is Transcription termination factor 2, mitochondrial (Mterf2), found in Mus musculus (Mouse).